We begin with the raw amino-acid sequence, 493 residues long: Probable mannosyl-oligosaccharide alpha-1,2-mannosidase 1B (493 aa).

The signal sequence occupies residues 1–18; it reads MHLPSLSVALALVSSSLA. N-linked (GlcNAc...) asparagine glycosylation is found at Asn-87 and Asn-174. Cys-324 and Cys-353 form a disulfide bridge. Glu-367 functions as the Proton donor in the catalytic mechanism. A glycan (N-linked (GlcNAc...) asparagine) is linked at Asn-489.

This sequence belongs to the glycosyl hydrolase 47 family. In terms of assembly, monomer. Ca(2+) is required as a cofactor. Requires Mg(2+) as cofactor.

Its subcellular location is the cytoplasmic vesicle lumen. It catalyses the reaction N(4)-(alpha-D-Man-(1-&gt;2)-alpha-D-Man-(1-&gt;2)-alpha-D-Man-(1-&gt;3)-[alpha-D-Man-(1-&gt;2)-alpha-D-Man-(1-&gt;3)-[alpha-D-Man-(1-&gt;2)-alpha-D-Man-(1-&gt;6)]-alpha-D-Man-(1-&gt;6)]-beta-D-Man-(1-&gt;4)-beta-D-GlcNAc-(1-&gt;4)-beta-D-GlcNAc)-L-asparaginyl-[protein] (N-glucan mannose isomer 9A1,2,3B1,2,3) + 4 H2O = N(4)-(alpha-D-Man-(1-&gt;3)-[alpha-D-Man-(1-&gt;3)-[alpha-D-Man-(1-&gt;6)]-alpha-D-Man-(1-&gt;6)]-beta-D-Man-(1-&gt;4)-beta-D-GlcNAc-(1-&gt;4)-beta-D-GlcNAc)-L-asparaginyl-[protein] (N-glucan mannose isomer 5A1,2) + 4 beta-D-mannose. The enzyme catalyses N(4)-(alpha-D-Man-(1-&gt;2)-alpha-D-Man-(1-&gt;2)-alpha-D-Man-(1-&gt;3)-[alpha-D-Man-(1-&gt;3)-[alpha-D-Man-(1-&gt;2)-alpha-D-Man-(1-&gt;6)]-alpha-D-Man-(1-&gt;6)]-beta-D-Man-(1-&gt;4)-beta-D-GlcNAc-(1-&gt;4)-beta-D-GlcNAc)-L-asparaginyl-[protein] (N-glucan mannose isomer 8A1,2,3B1,3) + 3 H2O = N(4)-(alpha-D-Man-(1-&gt;3)-[alpha-D-Man-(1-&gt;3)-[alpha-D-Man-(1-&gt;6)]-alpha-D-Man-(1-&gt;6)]-beta-D-Man-(1-&gt;4)-beta-D-GlcNAc-(1-&gt;4)-beta-D-GlcNAc)-L-asparaginyl-[protein] (N-glucan mannose isomer 5A1,2) + 3 beta-D-mannose. It functions in the pathway protein modification; protein glycosylation. Involved in the maturation of Asn-linked oligosaccharides. Progressively trims alpha-1,2-linked mannose residues from Man(9)GlcNAc(2) to produce Man(5)GlcNAc(2). This chain is Probable mannosyl-oligosaccharide alpha-1,2-mannosidase 1B (mns1B), found in Aspergillus fumigatus (strain CBS 144.89 / FGSC A1163 / CEA10) (Neosartorya fumigata).